Reading from the N-terminus, the 151-residue chain is CD-NTase-associated protein 19 (151 aa).

The next 3 helical transmembrane spans lie at 25 to 45 (TVFN…GVTL), 52 to 72 (VLFT…FWKL), and 127 to 147 (ISFV…FLMK).

This sequence belongs to the Cap19 family.

It is found in the cell inner membrane. In terms of biological role, membrane protein component of a CBASS (cyclic oligonucleotide-based antiphage signaling system) which provides immunity against bacteriophage. The CD-NTase protein synthesizes cyclic nucleotides in response to infection; these serve as specific second messenger signals. The signals activate a diverse range of effectors, leading to bacterial cell death and thus abortive phage infection. A type III CBASS system. Expression of this CBASS system (Cap17-CapW-CdnC-Cap7-Cap6-Cap18-Cap19) in a susceptible E.coli (strain JP313) confers resistance to bacteriophage lambda cI-. This Escherichia coli protein is CD-NTase-associated protein 19.